The primary structure comprises 436 residues: Trigger factor (436 aa).

The 86-residue stretch at glutamate 161–proline 246 folds into the PPIase FKBP-type domain.

This sequence belongs to the FKBP-type PPIase family. Tig subfamily.

It is found in the cytoplasm. The enzyme catalyses [protein]-peptidylproline (omega=180) = [protein]-peptidylproline (omega=0). In terms of biological role, involved in protein export. Acts as a chaperone by maintaining the newly synthesized protein in an open conformation. Functions as a peptidyl-prolyl cis-trans isomerase. In Pseudomonas savastanoi pv. phaseolicola (strain 1448A / Race 6) (Pseudomonas syringae pv. phaseolicola (strain 1448A / Race 6)), this protein is Trigger factor.